A 126-amino-acid polypeptide reads, in one-letter code: C-type natriuretic peptide (126 aa).

The signal sequence occupies residues 1–23 (MHLSQLLACALLLSLLSLRPSEA). Positions 20-71 (PSEAKPGAPPKVPRTPPGEEVAEPQAAGGGQKKGDKTPGGGGANLKDDRSRL) are disordered. Positions 24 to 73 (KPGAPPKVPRTPPGEEVAEPQAAGGGQKKGDKTPGGGGANLKDDRSRLLR) are excised as a propeptide. A compositionally biased stretch (pro residues) spans 26-35 (GAPPKVPRTP). Residues 46–62 (AGGGQKKGDKTPGGGGA) are compositionally biased toward gly residues. Cys110 and Cys126 are disulfide-bonded.

It belongs to the natriuretic peptide family. In terms of processing, degraded by IDE (in vitro).

The protein resides in the secreted. In terms of biological role, hormone which plays a role in endochondral ossification through regulation of cartilaginous growth plate chondrocytes proliferation and differentiation. May also be vasoactive and natriuretic. Acts by specifically binding and stimulating NPR2 to produce cGMP. Binds the clearance receptor NPR3. In Ovis aries (Sheep), this protein is C-type natriuretic peptide (NPPC).